The chain runs to 243 residues: Ubiquinone/menaquinone biosynthesis C-methyltransferase UbiE (243 aa).

Residues Thr-69, Asp-90, and 116-117 (DA) each bind S-adenosyl-L-methionine.

The protein belongs to the class I-like SAM-binding methyltransferase superfamily. MenG/UbiE family.

It catalyses the reaction a 2-demethylmenaquinol + S-adenosyl-L-methionine = a menaquinol + S-adenosyl-L-homocysteine + H(+). The catalysed reaction is a 2-methoxy-6-(all-trans-polyprenyl)benzene-1,4-diol + S-adenosyl-L-methionine = a 5-methoxy-2-methyl-3-(all-trans-polyprenyl)benzene-1,4-diol + S-adenosyl-L-homocysteine + H(+). Its pathway is quinol/quinone metabolism; menaquinone biosynthesis; menaquinol from 1,4-dihydroxy-2-naphthoate: step 2/2. It participates in cofactor biosynthesis; ubiquinone biosynthesis. Its function is as follows. Methyltransferase required for the conversion of demethylmenaquinol (DMKH2) to menaquinol (MKH2) and the conversion of 2-polyprenyl-6-methoxy-1,4-benzoquinol (DDMQH2) to 2-polyprenyl-3-methyl-6-methoxy-1,4-benzoquinol (DMQH2). This is Ubiquinone/menaquinone biosynthesis C-methyltransferase UbiE from Paraburkholderia xenovorans (strain LB400).